The chain runs to 198 residues: Protein GrpE (198 aa).

It belongs to the GrpE family. As to quaternary structure, homodimer.

The protein localises to the cytoplasm. Its function is as follows. Participates actively in the response to hyperosmotic and heat shock by preventing the aggregation of stress-denatured proteins, in association with DnaK and GrpE. It is the nucleotide exchange factor for DnaK and may function as a thermosensor. Unfolded proteins bind initially to DnaJ; upon interaction with the DnaJ-bound protein, DnaK hydrolyzes its bound ATP, resulting in the formation of a stable complex. GrpE releases ADP from DnaK; ATP binding to DnaK triggers the release of the substrate protein, thus completing the reaction cycle. Several rounds of ATP-dependent interactions between DnaJ, DnaK and GrpE are required for fully efficient folding. The chain is Protein GrpE from Vibrio harveyi (Beneckea harveyi).